Reading from the N-terminus, the 294-residue chain is 4-hydroxy-tetrahydrodipicolinate synthase (294 aa).

Thr-47 is a pyruvate binding site. The active-site Proton donor/acceptor is the Tyr-135. Catalysis depends on Lys-163, which acts as the Schiff-base intermediate with substrate. Thr-205 lines the pyruvate pocket.

It belongs to the DapA family. As to quaternary structure, homotetramer; dimer of dimers.

Its subcellular location is the cytoplasm. The catalysed reaction is L-aspartate 4-semialdehyde + pyruvate = (2S,4S)-4-hydroxy-2,3,4,5-tetrahydrodipicolinate + H2O + H(+). Its pathway is amino-acid biosynthesis; L-lysine biosynthesis via DAP pathway; (S)-tetrahydrodipicolinate from L-aspartate: step 3/4. Its function is as follows. Catalyzes the condensation of (S)-aspartate-beta-semialdehyde [(S)-ASA] and pyruvate to 4-hydroxy-tetrahydrodipicolinate (HTPA). This is 4-hydroxy-tetrahydrodipicolinate synthase from Rickettsia felis (strain ATCC VR-1525 / URRWXCal2) (Rickettsia azadi).